The following is a 366-amino-acid chain: Phospho-N-acetylmuramoyl-pentapeptide-transferase (366 aa).

10 consecutive transmembrane segments (helical) span residues 27–47, 71–91, 93–113, 134–154, 174–194, 205–225, 245–265, 268–288, 294–314, and 343–363; these read AALF…INSL, TPTM…LLWA, LSNV…AIGF, LGIE…TALA, FLIN…VGAG, GLAI…AYLA, LAVV…FNAP, AIFM…TVAV, IVMA…IIQV, and QVVI…LSTL.

This sequence belongs to the glycosyltransferase 4 family. MraY subfamily. The cofactor is Mg(2+).

Its subcellular location is the cell inner membrane. It catalyses the reaction UDP-N-acetyl-alpha-D-muramoyl-L-alanyl-gamma-D-glutamyl-meso-2,6-diaminopimeloyl-D-alanyl-D-alanine + di-trans,octa-cis-undecaprenyl phosphate = di-trans,octa-cis-undecaprenyl diphospho-N-acetyl-alpha-D-muramoyl-L-alanyl-D-glutamyl-meso-2,6-diaminopimeloyl-D-alanyl-D-alanine + UMP. It functions in the pathway cell wall biogenesis; peptidoglycan biosynthesis. In terms of biological role, catalyzes the initial step of the lipid cycle reactions in the biosynthesis of the cell wall peptidoglycan: transfers peptidoglycan precursor phospho-MurNAc-pentapeptide from UDP-MurNAc-pentapeptide onto the lipid carrier undecaprenyl phosphate, yielding undecaprenyl-pyrophosphoryl-MurNAc-pentapeptide, known as lipid I. The sequence is that of Phospho-N-acetylmuramoyl-pentapeptide-transferase from Rhizobium etli (strain CIAT 652).